We begin with the raw amino-acid sequence, 142 residues long: Large ribosomal subunit protein uL11 (142 aa).

This sequence belongs to the universal ribosomal protein uL11 family. As to quaternary structure, part of the ribosomal stalk of the 50S ribosomal subunit. Interacts with L10 and the large rRNA to form the base of the stalk. L10 forms an elongated spine to which L12 dimers bind in a sequential fashion forming a multimeric L10(L12)X complex. Post-translationally, one or more lysine residues are methylated.

In terms of biological role, forms part of the ribosomal stalk which helps the ribosome interact with GTP-bound translation factors. The chain is Large ribosomal subunit protein uL11 from Beijerinckia indica subsp. indica (strain ATCC 9039 / DSM 1715 / NCIMB 8712).